A 418-amino-acid polypeptide reads, in one-letter code: Homoaconitase large subunit (418 aa).

Residues Cys292, Cys352, and Cys355 each contribute to the [4Fe-4S] cluster site.

The protein belongs to the aconitase/IPM isomerase family. In terms of assembly, heterodimer of HacA and HacB. It depends on [4Fe-4S] cluster as a cofactor.

It catalyses the reaction (2R,3S)-homoisocitrate = cis-homoaconitate + H2O. It participates in amino-acid biosynthesis; L-lysine biosynthesis via AAA pathway; L-alpha-aminoadipate from 2-oxoglutarate: step 3/5. Is not inhibited by lysine. Functionally, catalyzes the reversible hydration of cis-homoaconitate ((Z)-but-1-ene-1,2,4-tricarboxylate) to homoisocitrate ((1R,2S)-1-hydroxybutane-1,2,4-tricarboxylate). Can catalyze neither the dehydration of (R)-homocitrate ((2R)-2-hydroxybutane-1,2,4-tricarboxylate) into cis-homoaconitate in vitro, nor the reverse reaction. Is not active toward (S)-homocitrate, cis-aconitate or citrate as substrate. This chain is Homoaconitase large subunit (hacA), found in Thermus thermophilus (strain ATCC BAA-163 / DSM 7039 / HB27).